A 152-amino-acid chain; its full sequence is Cytochrome c oxidase subunit 5A, mitochondrial (152 aa).

A mitochondrion-targeting transit peptide spans 1-43 (MLGTALRRCAVAAAAASRAGPRGLLHPAPAPGPAAAIQSIRCY). Residues 2–22 (LGTALRRCAVAAAAASRAGPR) carry the SIFI-degron motif. N6-acetyllysine occurs at positions 89 and 115. Residue threonine 143 is modified to Phosphothreonine.

The protein belongs to the cytochrome c oxidase subunit 5A family. Component of the cytochrome c oxidase (complex IV, CIV), a multisubunit enzyme composed of 14 subunits. The complex is composed of a catalytic core of 3 subunits MT-CO1, MT-CO2 and MT-CO3, encoded in the mitochondrial DNA, and 11 supernumerary subunits COX4I, COX5A, COX5B, COX6A, COX6B, COX6C, COX7A, COX7B, COX7C, COX8 and NDUFA4, which are encoded in the nuclear genome. The complex exists as a monomer or a dimer and forms supercomplexes (SCs) in the inner mitochondrial membrane with NADH-ubiquinone oxidoreductase (complex I, CI) and ubiquinol-cytochrome c oxidoreductase (cytochrome b-c1 complex, complex III, CIII), resulting in different assemblies (supercomplex SCI(1)III(2)IV(1) and megacomplex MCI(2)III(2)IV(2)). Interacts with AFG1L. Interacts with RAB5IF. Post-translationally, in response to mitochondrial stress, the precursor protein is ubiquitinated by the SIFI complex in the cytoplasm before mitochondrial import, leading to its degradation. Within the SIFI complex, UBR4 initiates ubiquitin chain that are further elongated or branched by KCMF1.

It localises to the mitochondrion inner membrane. Its pathway is energy metabolism; oxidative phosphorylation. Component of the cytochrome c oxidase, the last enzyme in the mitochondrial electron transport chain which drives oxidative phosphorylation. The respiratory chain contains 3 multisubunit complexes succinate dehydrogenase (complex II, CII), ubiquinol-cytochrome c oxidoreductase (cytochrome b-c1 complex, complex III, CIII) and cytochrome c oxidase (complex IV, CIV), that cooperate to transfer electrons derived from NADH and succinate to molecular oxygen, creating an electrochemical gradient over the inner membrane that drives transmembrane transport and the ATP synthase. Cytochrome c oxidase is the component of the respiratory chain that catalyzes the reduction of oxygen to water. Electrons originating from reduced cytochrome c in the intermembrane space (IMS) are transferred via the dinuclear copper A center (CU(A)) of subunit 2 and heme A of subunit 1 to the active site in subunit 1, a binuclear center (BNC) formed by heme A3 and copper B (CU(B)). The BNC reduces molecular oxygen to 2 water molecules using 4 electrons from cytochrome c in the IMS and 4 protons from the mitochondrial matrix. This is Cytochrome c oxidase subunit 5A, mitochondrial (COX5A) from Eulemur fulvus fulvus (Brown lemur).